The chain runs to 307 residues: MPSEHPFSDGISTPNPKETMNDTAQITASYGRRYIVRTPDGTTYEASTRKKRVDFACGDRVRISPVNAEQVVIEDFLPRQSLLYRQDAWKTKLIAANVTQLLIVTAAVPSPSVRLLQRALLAAEAAGIRAVIVLNKADLPETALWREKLKFYETLGYPVIETRALENAGSLRPALQGHSNILLGQSGMGKSTLTNALLGSQTARTGDISAALDSGKHTTTHARLYDLNGETQLIDSPGLQEFGLHHLQAADLPRYFPDFRHLVGQCRFHNCTHRAEPGCAFKAAAETRAASPERLAFLQGITDELPG.

The segment at 1 to 20 (MPSEHPFSDGISTPNPKETM) is disordered. Residues 10-20 (GISTPNPKETM) show a composition bias toward polar residues. The region spanning 85–242 (RQDAWKTKLI…LIDSPGLQEF (158 aa)) is the CP-type G domain. GTP is bound by residues 135–138 (NKAD) and 184–192 (GQSGMGKST). Residues Cys-266, Cys-271, His-273, and Cys-279 each coordinate Zn(2+).

Belongs to the TRAFAC class YlqF/YawG GTPase family. RsgA subfamily. Monomer. Associates with 30S ribosomal subunit, binds 16S rRNA. The cofactor is Zn(2+).

Its subcellular location is the cytoplasm. Functionally, one of several proteins that assist in the late maturation steps of the functional core of the 30S ribosomal subunit. Helps release RbfA from mature subunits. May play a role in the assembly of ribosomal proteins into the subunit. Circularly permuted GTPase that catalyzes slow GTP hydrolysis, GTPase activity is stimulated by the 30S ribosomal subunit. The sequence is that of Small ribosomal subunit biogenesis GTPase RsgA from Neisseria meningitidis serogroup A / serotype 4A (strain DSM 15465 / Z2491).